Here is a 695-residue protein sequence, read N- to C-terminus: UvrABC system protein B (695 aa).

The region spanning 25 to 176 (KSISEGHRFQ…NQRDVLRDLA (152 aa)) is the Helicase ATP-binding domain. 38 to 45 (GATGTGKT) serves as a coordination point for ATP. Residues 91–114 (YYDYYQPEAYVPSTDTYIAKSSSI) carry the Beta-hairpin motif. The region spanning 454-617 (LLGEIYLRLE…ITPKPIVKKN (164 aa)) is the Helicase C-terminal domain. Positions 652–687 (PELIGQLELKMKEAAKNLEFEEAAQLRDRIKKLRQR) constitute a UVR domain.

This sequence belongs to the UvrB family. In terms of assembly, forms a heterotetramer with UvrA during the search for lesions. Interacts with UvrC in an incision complex.

It localises to the cytoplasm. The UvrABC repair system catalyzes the recognition and processing of DNA lesions. A damage recognition complex composed of 2 UvrA and 2 UvrB subunits scans DNA for abnormalities. Upon binding of the UvrA(2)B(2) complex to a putative damaged site, the DNA wraps around one UvrB monomer. DNA wrap is dependent on ATP binding by UvrB and probably causes local melting of the DNA helix, facilitating insertion of UvrB beta-hairpin between the DNA strands. Then UvrB probes one DNA strand for the presence of a lesion. If a lesion is found the UvrA subunits dissociate and the UvrB-DNA preincision complex is formed. This complex is subsequently bound by UvrC and the second UvrB is released. If no lesion is found, the DNA wraps around the other UvrB subunit that will check the other stand for damage. This chain is UvrABC system protein B, found in Synechococcus sp. (strain JA-2-3B'a(2-13)) (Cyanobacteria bacterium Yellowstone B-Prime).